Reading from the N-terminus, the 261-residue chain is Acidic leucine-rich nuclear phosphoprotein 32 family member B (261 aa).

LRR repeat units follow at residues P16–E40, N43–P64, K65–L87, and N89–K110. N6-acetyllysine is present on K86. The LRRCT domain occupies C123 to E161. A disordered region spans residues D149–D261. Residues D157–E243 are compositionally biased toward acidic residues. At S158 the chain carries Phosphoserine. Positions S244–T254 are enriched in basic and acidic residues. The Nuclear localization signal signature appears at K249–R252. T254 bears the Phosphothreonine mark.

The protein belongs to the ANP32 family. Interacts with histones H3 and H4. Interacts with KLF5; this interaction induces promoter region-specific histone incorporation and inhibition of histone acetylation by ANP32B. Some Glu residues are glycylated by TTLL8; a modification that generates a side chains of glycine on the gamma-carboxyl groups of specific glutamate residues. Post-translationally, directly cleaved by caspase-3/CASP3.

The protein localises to the nucleus. Its function is as follows. Multifunctional protein that is involved in the regulation of many processes including cell proliferation, apoptosis, cell cycle progression or transcription. Regulates the proliferation of neuronal stem cells, differentiation of leukemic cells and progression from G1 to S phase of the cell cycle. As negative regulator of caspase-3-dependent apoptosis, may act as an antagonist of ANP32A in regulating tissue homeostasis. Exhibits histone chaperone properties, able to recruit histones to certain promoters, thus regulating the transcription of specific genes. Also plays an essential role in the nucleocytoplasmic transport of specific mRNAs via the uncommon nuclear mRNA export receptor XPO1/CRM1. Participates in the regulation of adequate adaptive immune responses by acting on mRNA expression and cell proliferation. This Bos taurus (Bovine) protein is Acidic leucine-rich nuclear phosphoprotein 32 family member B (ANP32B).